Reading from the N-terminus, the 155-residue chain is Protein-export protein SecB (155 aa).

The protein belongs to the SecB family. Homotetramer, a dimer of dimers. One homotetramer interacts with 1 SecA dimer.

It localises to the cytoplasm. One of the proteins required for the normal export of preproteins out of the cell cytoplasm. It is a molecular chaperone that binds to a subset of precursor proteins, maintaining them in a translocation-competent state. It also specifically binds to its receptor SecA. This is Protein-export protein SecB from Methylococcus capsulatus (strain ATCC 33009 / NCIMB 11132 / Bath).